We begin with the raw amino-acid sequence, 378 residues long: Putative glutamate--cysteine ligase 2 (378 aa).

This sequence belongs to the glutamate--cysteine ligase type 2 family. YbdK subfamily.

The enzyme catalyses L-cysteine + L-glutamate + ATP = gamma-L-glutamyl-L-cysteine + ADP + phosphate + H(+). Functionally, ATP-dependent carboxylate-amine ligase which exhibits weak glutamate--cysteine ligase activity. The sequence is that of Putative glutamate--cysteine ligase 2 from Salinispora arenicola (strain CNS-205).